Here is a 372-residue protein sequence, read N- to C-terminus: Cytochrome b (372 aa).

4 helical membrane-spanning segments follow: residues 25-45 (FGSM…FLAI), 69-90 (WIMQ…YIHI), 105-125 (WLSG…GYVL), and 170-190 (FFAL…IHIM). Positions 75 and 89 each coordinate heme b. Positions 174 and 188 each coordinate heme b. H193 serves as a coordination point for a ubiquinone. A run of 4 helical transmembrane segments spans residues 218–238 (YKDM…LSFS), 280–300 (LGGT…PFTH), 312–332 (LSQI…WTAS), and 339–358 (FILI…IMAP).

Belongs to the cytochrome b family. In terms of assembly, the cytochrome bc1 complex contains 3 respiratory subunits (MT-CYB, CYC1 and UQCRFS1), 2 core proteins (UQCRC1 and UQCRC2) and probably 6 low-molecular weight proteins. Requires heme b as cofactor.

It is found in the mitochondrion inner membrane. Its function is as follows. Component of the ubiquinol-cytochrome c reductase complex (complex III or cytochrome b-c1 complex) that is part of the mitochondrial respiratory chain. The b-c1 complex mediates electron transfer from ubiquinol to cytochrome c. Contributes to the generation of a proton gradient across the mitochondrial membrane that is then used for ATP synthesis. The polypeptide is Cytochrome b (MT-CYB) (Hemachatus haemachatus (Rinkhals)).